We begin with the raw amino-acid sequence, 427 residues long: Indole diterpene prenyltransferase penD (427 aa).

Residue 77–78 participates in L-tryptophan binding; that stretch reads YV. Arg99, Lys186, Tyr188, Arg259, Lys261, Tyr263, Tyr344, Tyr409, and Tyr413 together coordinate substrate.

Belongs to the tryptophan dimethylallyltransferase family.

The protein operates within secondary metabolite biosynthesis. Functionally, indole diterpene prenyltransferase; part of the gene cluster that mediates the biosynthesis of the indole diterpenes penitrems. The geranylgeranyl diphosphate (GGPP) synthase penG catalyzes the first step in penitrem biosynthesis via conversion of farnesyl pyrophosphate and isopentyl pyrophosphate into geranylgeranyl pyrophosphate (GGPP). Condensation of indole-3-glycerol phosphate with GGPP by the prenyl transferase penC then forms 3-geranylgeranylindole (3-GGI). Epoxidation by the FAD-dependent monooxygenase penM leads to a epoxidized-GGI that is substrate of the terpene cyclase penB for cyclization to yield paspaline. Paspaline is subsequently converted to 13-desoxypaxilline by the cytochrome P450 monooxygenase penP, the latter being then converted to paxilline by the cytochrome P450 monooxygenase penQ. Paxilline is converted to beta-paxitriol via C-10 ketoreduction by the short-chain dehydrogenase PC-15 which can be monoprenylated at the C-20 by the indole diterpene prenyltransferase penD. A two-step elimination (acetylation and elimination) process performed by the O-acetyltransferase PC-16 and the P.simplicissimum ptmI-ortholog not yet identified in P.crustosum, leads to the production of the prenylated form of penijanthine. The FAD-linked oxidoreductase ptmO then converts the prenylated form of penijanthine into PC-M5 which is in turn transformed into PC-M4 by the aromatic dimethylallyltransferase PC-22. A series of oxidation steps involving 4 cytochrome P450 monooxygenases (PC-21, PC-05, PC-23, PC-20) and a FAD-dependent monooxygenase (PC-14) are required for the transformation of PC-M4 to penitrems A and E. Synthesis of these final products is proposed to proceed via penitrems D and C (PC-21, PC-05, PC-14) and penitrems B and F (PC-21, PC-05, PC-14, PC-23). In Penicillium crustosum (Blue mold fungus), this protein is Indole diterpene prenyltransferase penD.